We begin with the raw amino-acid sequence, 201 residues long: Small ribosomal subunit protein uS4 (201 aa).

Residues 1 to 38 (MARYTGPATRKSRRLGVDLVGGDQSFEKRPYPPGQHGR) are disordered. Residues 91–157 (SRLDNVVYRA…DPFVIARETA (67 aa)) enclose the S4 RNA-binding domain.

This sequence belongs to the universal ribosomal protein uS4 family. As to quaternary structure, part of the 30S ribosomal subunit. Contacts protein S5. The interaction surface between S4 and S5 is involved in control of translational fidelity.

One of the primary rRNA binding proteins, it binds directly to 16S rRNA where it nucleates assembly of the body of the 30S subunit. Its function is as follows. With S5 and S12 plays an important role in translational accuracy. This is Small ribosomal subunit protein uS4 from Mycobacterium sp. (strain JLS).